The primary structure comprises 172 residues: MSDSYDDFSLEKSKSQVKRELHALQDLGERLTTLKADLLAKLPLTDALRRALAEAPKHTANAARKRHIQFIGKLMREQDIEAILALIDQVDSSTREYNERFHALERWRDRLIGEGDSALEGFVELYPDADRQHLRGLIRHAQHEAAHNKPPAAARKVFKYIRELDEIQRGLR.

It belongs to the DarP family.

It localises to the cytoplasm. Its function is as follows. Member of a network of 50S ribosomal subunit biogenesis factors which assembles along the 30S-50S interface, preventing incorrect 23S rRNA structures from forming. Promotes peptidyl transferase center (PTC) maturation. This chain is Dual-action ribosomal maturation protein DarP, found in Ectopseudomonas mendocina (strain ymp) (Pseudomonas mendocina).